Here is a 260-residue protein sequence, read N- to C-terminus: Hemin import ATP-binding protein HmuV (260 aa).

An ABC transporter domain is found at 3-239 (LHAQQISLSI…QRLSEVYGCD (237 aa)). 35–42 (GPNGSGKS) serves as a coordination point for ATP.

It belongs to the ABC transporter superfamily. Heme (hemin) importer (TC 3.A.1.14.5) family. The complex is composed of two ATP-binding proteins (HmuV), two transmembrane proteins (HmuU) and a solute-binding protein (HmuT).

The protein localises to the cell inner membrane. Part of the ABC transporter complex HmuTUV involved in hemin import. Responsible for energy coupling to the transport system. This is Hemin import ATP-binding protein HmuV from Ruegeria sp. (strain TM1040) (Silicibacter sp.).